We begin with the raw amino-acid sequence, 269 residues long: Protein shisa-1 (269 aa).

A signal peptide spans 1 to 18 (MEFIVLLTVCALLGLSCG). The Extracellular portion of the chain corresponds to 19-98 (QHGEYCHGWT…LPPTVPTYFP (80 aa)). The chain crosses the membrane as a helical span at residues 99–119 (FLLVGSIFVSFVILGSLVGLC). Over 120–269 (CCKCLKPEDD…TVCSGSPSKC (150 aa)) the chain is Cytoplasmic. Positions 129–167 (DTQVSGPAPIQSRLLDQDPSTDTSRHSSSSSASMPRPPI) are disordered. Over residues 146-162 (DPSTDTSRHSSSSSASM) the composition is skewed to low complexity.

This sequence belongs to the shisa family. Interacts with immature forms of fzd8 and fgfr.

The protein resides in the endoplasmic reticulum. Its subcellular location is the membrane. In terms of biological role, required for head formation during gastrulation. Functions as an inhibitor for the caudalizing signals wnt and fgf, does not inhibit bmp, activin and nodal signaling in head formation process. Induces retention of fzd8 in the endoplasmic reticulum and inhibits trafficking of fzd8 to the cell surface. This is Protein shisa-1 (shisa1) from Xenopus laevis (African clawed frog).